We begin with the raw amino-acid sequence, 398 residues long: Pectate lyase 1 (398 aa).

A signal peptide spans 1–25; sequence MGIKHCCYILYFTLALVTLLQPVRS. An N-linked (GlcNAc...) asparagine glycan is attached at Asn-37. Cys-55 and Cys-72 are oxidised to a cystine. The Ca(2+) site is built by Asp-195, Asp-219, and Asp-223. Residue Arg-275 is part of the active site.

This sequence belongs to the polysaccharide lyase 1 family. Amb a subfamily. As to quaternary structure, monomer. It depends on Ca(2+) as a cofactor. The N-terminus is blocked. As to expression, pollen and flowers.

It catalyses the reaction Eliminative cleavage of (1-&gt;4)-alpha-D-galacturonan to give oligosaccharides with 4-deoxy-alpha-D-galact-4-enuronosyl groups at their non-reducing ends.. The protein operates within glycan metabolism; pectin degradation; 2-dehydro-3-deoxy-D-gluconate from pectin: step 2/5. Its function is as follows. Has pectate lyase activity. The polypeptide is Pectate lyase 1 (Ambrosia artemisiifolia (Common ragweed)).